The chain runs to 285 residues: MSSDLAAELGFDPALKKKKKTKKVIPDDFDAAVNGKENGSGDDLFAGLKKKKKKSKSVSADAEAEKEPTDDIAEALGELSLKKKKKKTKDSSVDAFEKELAKAGLDNVDAESKEGTPSANSSIQQEVGLPYSELLSRFFNILRTNNPELAGDRSGPKFRIPPPVCLRDGKKTIFSNIQDIAEKLHRSPEHLIQYLFAELGTSGSVDGQKRLVIKGKFQSKQMENVLRRYILEYVTCKTCKSINTELKREQSNRLFFMVCKSCGSTRSVSSIKTGFQATVGKRRRM.

Residues aspartate 30 to threonine 69 form a disordered region. At serine 40 the chain carries Phosphoserine. At threonine 69 the chain carries Phosphothreonine. Phosphoserine is present on residues serine 80, serine 92, and serine 112. Threonine 116 bears the Phosphothreonine mark. Serine 118 is subject to Phosphoserine. Residues cysteine 236–cysteine 262 form a C4-type zinc finger.

This sequence belongs to the eIF-2-beta/eIF-5 family. As to quaternary structure, eukaryotic translation initiation factor 2 eIF2 is a heterotrimeric complex composed of an alpha, a beta and a gamma subunit. The factors eIF-1, eIF-2, eIF-3, TIF5/eIF-5 and methionyl-tRNAi form a multifactor complex (MFC) that may bind to the 40S ribosome. Interacts with GCD6. Interacts with GCD1. Interacts with TIF5/eIF-5. Interacts with CDC123.

The protein resides in the cytoplasm. Its subcellular location is the cytosol. Component of the eIF2 complex that functions in the early steps of protein synthesis by forming a ternary complex with GTP and initiator tRNA. This complex binds to a 40S ribosomal subunit, followed by mRNA binding to form a 43S pre-initiation complex (43S PIC). Junction of the 60S ribosomal subunit to form the 80S initiation complex is preceded by hydrolysis of the GTP bound to eIF2 and release of an eIF2-GDP binary complex. In order for eIF2 to recycle and catalyze another round of initiation, the GDP bound to eIF2 must exchange with GTP by way of a reaction catalyzed by eIF2B. In Saccharomyces cerevisiae (strain ATCC 204508 / S288c) (Baker's yeast), this protein is Eukaryotic translation initiation factor 2 subunit beta (SUI3).